Here is a 411-residue protein sequence, read N- to C-terminus: Lissencephaly-1 homolog (411 aa).

The LisH domain occupies Gln9–Thr41. Residues Thr56–Ala83 adopt a coiled-coil conformation. 7 WD repeats span residues Gly106–Lys147, Gly148–Lys187, Gly191–Thr230, Gly233–Glu272, Asp275–Thr334, Gly337–Thr376, and Ala379–Arg411.

It belongs to the WD repeat LIS1/nudF family.

It localises to the cytoplasm. The protein localises to the cytoskeleton. Its subcellular location is the microtubule organizing center. It is found in the centrosome. Functionally, positively regulates the activity of the minus-end directed microtubule motor protein dynein. May enhance dynein-mediated microtubule sliding by targeting dynein to the microtubule plus end. Required for several dynein- and microtubule-dependent processes. This Drosophila ananassae (Fruit fly) protein is Lissencephaly-1 homolog.